Here is a 285-residue protein sequence, read N- to C-terminus: Glutamate racemase (285 aa).

Substrate-binding positions include 28-29 (DS) and 60-61 (YG). The Proton donor/acceptor role is filled by C92. 93–94 (NT) serves as a coordination point for substrate. Catalysis depends on C204, which acts as the Proton donor/acceptor. A substrate-binding site is contributed by 205-206 (TH).

Belongs to the aspartate/glutamate racemases family.

The catalysed reaction is L-glutamate = D-glutamate. It functions in the pathway cell wall biogenesis; peptidoglycan biosynthesis. In terms of biological role, provides the (R)-glutamate required for cell wall biosynthesis. The chain is Glutamate racemase from Shigella flexneri serotype 5b (strain 8401).